The primary structure comprises 178 residues: Gamma-crystallin S (178 aa).

S2 is modified (N-acetylserine). The segment at 2–5 is N-terminal arm; the sequence is SKSG. Beta/gamma crystallin 'Greek key' domains follow at residues 6-44 and 45-87; these read TKIT…RVEG and GTWA…RAVH. Residues 88 to 93 form a connecting peptide region; it reads LSSGGQ. 2 consecutive Beta/gamma crystallin 'Greek key' domains span residues 94-134 and 135-177; these read YKIQ…KVLD and GVWI…RRIV.

Belongs to the beta/gamma-crystallin family. In terms of assembly, monomer.

Functionally, crystallins are the dominant structural components of the vertebrate eye lens. The chain is Gamma-crystallin S (CRYGS) from Canis lupus familiaris (Dog).